The chain runs to 239 residues: Lactate utilization protein A 1 (239 aa).

Belongs to the LutA/YkgE family.

In terms of biological role, is involved in L-lactate degradation and allows cells to grow with lactate as the sole carbon source. The chain is Lactate utilization protein A 1 from Bacillus cereus (strain AH820).